The following is a 514-amino-acid chain: Thymus-specific serine protease (514 aa).

Positions Met-1–Ala-24 are cleaved as a signal peptide. Residues Asn-70 and Asn-172 are each glycosylated (N-linked (GlcNAc...) asparagine). The active-site Charge relay system is Ser-185. Asn-321 carries an N-linked (GlcNAc...) asparagine glycan. Active-site charge relay system residues include Asp-447 and His-472.

This sequence belongs to the peptidase S28 family. In terms of tissue distribution, expressed predominantly in cortical thymic epithelial cells.

Its subcellular location is the cytoplasmic vesicle. Protease that may play a role in T-cell development. The protein is Thymus-specific serine protease (PRSS16) of Homo sapiens (Human).